A 485-amino-acid polypeptide reads, in one-letter code: Alpha-amylase (485 aa).

The first 18 residues, 1–18, serve as a signal peptide directing secretion; the sequence is MQHLSILLVVLGSSIAFA. Q19 is subject to Pyrrolidone carboxylic acid. C46 and C102 are disulfide-bonded. Ca(2+) is bound by residues N116, R163, and D172. A disulfide bond links C152 and C165. Residue R200 participates in chloride binding. D202 acts as the Nucleophile in catalysis. H206 is a binding site for Ca(2+). Residue E238 is the Proton donor of the active site. N301 provides a ligand contact to chloride. C369 and C375 are oxidised to a cystine. N-linked (GlcNAc...) asparagine glycosylation is found at N423 and N449. Residues C440 and C452 are joined by a disulfide bond.

The protein belongs to the glycosyl hydrolase 13 family. As to quaternary structure, monomer. The cofactor is Ca(2+). Requires chloride as cofactor.

The catalysed reaction is Endohydrolysis of (1-&gt;4)-alpha-D-glucosidic linkages in polysaccharides containing three or more (1-&gt;4)-alpha-linked D-glucose units.. Functionally, involved in the digestion of starch. This chain is Alpha-amylase, found in Hypothenemus hampei (Coffee berry borer).